Reading from the N-terminus, the 419-residue chain is Synaptotagmin-1 (419 aa).

At 1–58 (MVSESHHEALAAPPVTTVATVLPSNATEPASPGEGKEDAFSKLKEKFMNELHKIPLPP) the chain is on the vesicular side. Residue Asn25 is glycosylated (N-linked (GlcNAc...) asparagine). Residues 59 to 80 (WALIAIAIVAVLLVLTCCFCIC) form a helical membrane-spanning segment. S-palmitoyl cysteine attachment occurs at residues Cys75, Cys76, Cys78, Cys80, and Cys83. At 81-419 (KKCLFKKKNK…EVDAMLAVKK (339 aa)) the chain is on the cytoplasmic side. Residues 108 to 139 (KDLGKTMKDQDDDAETGLTDGEEKEEPKEEEK) form a disordered region. Positions 117-131 (QDDDAETGLTDGEEK) are enriched in acidic residues. Thr126 bears the Phosphothreonine mark. Positions 133-379 (EPKEEEKLGK…AIGKVFVGYN (247 aa)) are phospholipid binding. Residues 139-258 (KLGKLQYSLD…DFGHVTEEWR (120 aa)) form the C2 1 domain. The Ca(2+) site is built by Leu169, Asp170, and Asp176. At Tyr227 the chain carries Phosphotyrosine. Positions 228, 229, 230, 233, 234, and 236 each coordinate Ca(2+). At Ser262 the chain carries Phosphoserine. The C2 2 domain maps to 270-403 (KLGDICFSLR…NPRRPIAQWH (134 aa)). Residues Asp301 and Asp307 each coordinate Ca(2+). Phosphoserine occurs at positions 340 and 342. 3 residues coordinate Ca(2+): Asp361, Asp363, and Asp369.

Belongs to the synaptotagmin family. In terms of assembly, homotetramer. Heterodimer; heterodimerizes with SYT2 in presence of calcium. Interacts with SCAMP5. Interacts with STON2. Forms a complex with SV2B, syntaxin 1 and SNAP25. Interacts with SV2A, SV2B and SV2C. Interacts with RIMS1. Interacts with PRRT2. Interacts with DNAJC5 in a phosphorylation-dependent manner. Interacts (via N-terminus) with RAB3A. Interacts with SYT12. Interacts with calmodulin. Interacts with DNM1 (via C-terminal proline-rich domain (PRD)); this interaction facilitates vesicle fission during clathrin-mediated endocytosis (CME). Ca(2+) serves as cofactor. Post-translationally, glycosylated.

It localises to the cytoplasmic vesicle. It is found in the secretory vesicle membrane. The protein localises to the secretory vesicle. Its subcellular location is the synaptic vesicle membrane. The protein resides in the chromaffin granule membrane. It localises to the cytoplasm. Calcium sensor that participates in triggering neurotransmitter release at the synapse. May have a regulatory role in the membrane interactions during trafficking of synaptic vesicles at the active zone of the synapse. It binds acidic phospholipids with a specificity that requires the presence of both an acidic head group and a diacyl backbone. A Ca(2+)-dependent interaction between synaptotagmin and putative receptors for activated protein kinase C has also been reported. It can bind to at least three additional proteins in a Ca(2+)-independent manner; these are neurexins, syntaxin and AP2. Plays a role in dendrite formation by melanocytes. The chain is Synaptotagmin-1 from Pongo abelii (Sumatran orangutan).